The primary structure comprises 368 residues: Probable multidrug ABC transporter permease YbhR (368 aa).

The Cytoplasmic segment spans residues 1–24 (MFHRLWTLIRKELQSLLREPQTRA). The helical transmembrane segment at 25 to 45 (ILILPVLIQVILFPFAATLEV) threads the bilayer. At 46–173 (TNATIAIYDE…WYNPNLDYKW (128 aa)) the chain is on the periplasmic side. An ABC transmembrane type-2 domain is found at 129 to 366 (AQIAANYLQQ…SAAYAMFRRK (238 aa)). Residues 174–194 (FVVPSLIAMITTIGVMIVTSL) traverse the membrane as a helical segment. Over 195–222 (SVAREREQGTLDQLLVSPLTTWQIFIGK) the chain is Cytoplasmic. Residues 223 to 243 (AVPALIVATFQATIVLAIGIW) form a helical membrane-spanning segment. Over 244–253 (AYQIPFAGSL) the chain is Periplasmic. Residues 254 to 274 (ALFYFTMVIYGLSLVGFGLLI) traverse the membrane as a helical segment. The Cytoplasmic segment spans residues 275–284 (SSLCSTQQQA). Residues 285-305 (FIGVFVFMMPAILLSGYVSPV) form a helical membrane-spanning segment. Residues 306-339 (ENMPVWLQNLTWINPIRHFTDITKQIYLKDASLD) lie on the Periplasmic side of the membrane. Residues 340 to 360 (IVWNSLWPLLVITATTGSAAY) traverse the membrane as a helical segment. The Cytoplasmic segment spans residues 361–368 (AMFRRKVM).

The protein belongs to the ABC-2 integral membrane protein family. In terms of assembly, the complex is probably composed of two ATP-binding proteins (YbhF) and two transmembrane proteins (YbhR and YbhS).

Its subcellular location is the cell inner membrane. In terms of biological role, part of the ABC transporter complex YbhFSR that could be involved in efflux of cefoperazone. Probably involved in the translocation of the substrate across the membrane. The protein is Probable multidrug ABC transporter permease YbhR (ybhR) of Escherichia coli O157:H7.